Reading from the N-terminus, the 251-residue chain is 7-cyano-7-deazaguanine synthase (251 aa).

Residues 1 to 21 (MSDLPRHSPRRQHAGESAVTA) are disordered. 35-45 (YSGGMDSYTVL) is an ATP binding site. 4 residues coordinate Zn(2+): Cys212, Cys220, Cys223, and Cys226.

It belongs to the QueC family. The cofactor is Zn(2+).

The catalysed reaction is 7-carboxy-7-deazaguanine + NH4(+) + ATP = 7-cyano-7-deazaguanine + ADP + phosphate + H2O + H(+). Its pathway is purine metabolism; 7-cyano-7-deazaguanine biosynthesis. In terms of biological role, catalyzes the ATP-dependent conversion of 7-carboxy-7-deazaguanine (CDG) to 7-cyano-7-deazaguanine (preQ(0)). The sequence is that of 7-cyano-7-deazaguanine synthase from Chromohalobacter salexigens (strain ATCC BAA-138 / DSM 3043 / CIP 106854 / NCIMB 13768 / 1H11).